The primary structure comprises 1016 residues: Nonsense-mediated mRNA decay factor SMG5 (1016 aa).

Residue Ser2 is modified to N-acetylserine. Phosphoserine is present on residues Ser2 and Ser423. Disordered stretches follow at residues 408 to 561 (NPVP…PSEA) and 594 to 637 (PTTN…RSCR). Residues 449 to 466 (KSRKFSRLSCLRRRRHPP) show a composition bias toward basic residues. Polar residues predominate over residues 594-603 (PTTNPHTSAS). Residues 619–628 (ASEEGSESEG) are compositionally biased toward acidic residues. Residues 798–841 (QSEQESLLQQAQAQFRMAQEEARRNRLMRDMAQLRLQLEVSQLE) are a coiled coil. One can recognise a PINc domain in the interval 872–995 (RQLATSGRFI…GPMQAALQAA (124 aa)).

As to quaternary structure, interacts with TERT, PPP2CA and SMG1. Part of a complex that contains SMG1, SMG5, SMG7, PPP2CA, a short isoform of UPF3A (isoform UPF3AS, but not isoform UPF3AL) and phosphorylated UPF1. Not detected in complexes that contain unphosphorylated UPF1. As to expression, ubiquitous.

It is found in the cytoplasm. The protein resides in the nucleus. Its function is as follows. Plays a role in nonsense-mediated mRNA decay. Does not have RNase activity by itself. Promotes dephosphorylation of UPF1. Together with SMG7 is thought to provide a link to the mRNA degradation machinery involving exonucleolytic pathways, and to serve as an adapter for UPF1 to protein phosphatase 2A (PP2A), thereby triggering UPF1 dephosphorylation. Necessary for TERT activity. This chain is Nonsense-mediated mRNA decay factor SMG5, found in Homo sapiens (Human).